Here is a 417-residue protein sequence, read N- to C-terminus: Lactose permease (417 aa).

The residue at position 1 (M1) is an N-formylmethionine; partial. Residues 1 to 7 (MYYLKNT) lie on the Cytoplasmic side of the membrane. The chain crosses the membrane as a helical span at residues 8–34 (NFWMFGLFFFFYFFIMGAYFPFFPIWL). Over 35–41 (HDINHIS) the chain is Periplasmic. A helical transmembrane segment spans residues 42–70 (KSDTGIIFAAISLFSLLFQPLFGLLSDKL). Over 71–74 (GLRK) the chain is Cytoplasmic. A helical transmembrane segment spans residues 75–100 (YLLWIITGMLVMFAPFFIFIFGPLLQ). Topologically, residues 101–104 (YNIL) are periplasmic. Residues 105–129 (VGSIVGGIYLGFCFNAGAPAVEAFI) form a helical membrane-spanning segment. The Cytoplasmic portion of the chain corresponds to 130 to 140 (EKVSRRSNFEF). The chain crosses the membrane as a helical span at residues 141 to 163 (GRARMFGCVGWALCASIVGIMFT). Residues 164-166 (INN) are Periplasmic-facing. A helical transmembrane segment spans residues 167 to 186 (QFVFWLGSGCALILAVLLFF). Over 187 to 220 (AKTDAPSSATVANAVGANHSAFSLKLALELFRQP) the chain is Cytoplasmic. The chain crosses the membrane as a helical span at residues 221-249 (KLWFLSLYVIGVSCTYDVFDQQFANFFTS). Residues 250–253 (FFAT) are Periplasmic-facing. Residues 254–278 (GEQGTRVFGYVTTMGELLNASIMFF) traverse the membrane as a helical segment. Residues 279 to 288 (APLIINRIGG) lie on the Cytoplasmic side of the membrane. The helical transmembrane segment at 289–308 (KNALLLAGTIMSVRIIGSSF) threads the bilayer. At 309 to 311 (ATS) the chain is on the periplasmic side. Residues 312 to 334 (ALEVVILKTLHMFEVPFLLVGCF) form a helical membrane-spanning segment. Residues 335-346 (KYITSQFEVRFS) lie on the Cytoplasmic side of the membrane. A helical transmembrane segment spans residues 347–374 (ATIYLVCFCFFKQLAMIFMSVLAGNMYE). The Periplasmic segment spans residues 375–377 (SIG). Residues 378 to 398 (FQGAYLVLGLVALGFTLISVF) form a helical membrane-spanning segment. The Cytoplasmic portion of the chain corresponds to 399-417 (TLSGPGPLSLLRRQVNEVA).

In terms of assembly, monomer.

It localises to the cell inner membrane. The catalysed reaction is lactose(in) + H(+)(in) = lactose(out) + H(+)(out). The enzyme catalyses melibiose(in) + H(+)(in) = melibiose(out) + H(+)(out). With respect to regulation, inhibited by the proton ionophore carbonyl cyanide m-chlorophenylhydrazone (CCCP). Its function is as follows. Responsible for transport of beta-galactosides into the cell, with the concomitant import of a proton (symport system). Can transport lactose, melibiose, the synthetic disaccharide lactulose or the analog methyl-1-thio-beta,D-galactopyranoside (TMG), but not sucrose or fructose. The substrate specificity is directed toward the galactopyranosyl moiety of the substrate. The polypeptide is Lactose permease (Escherichia coli (strain K12)).